The primary structure comprises 184 residues: Lactoylglutathione lyase (184 aa).

Residue alanine 2 is modified to N-acetylalanine. The cysteines at positions 19 and 20 are disulfide-linked. A VOC domain is found at 31-177 (LLQQTMLRIK…DGYWIEILNP (147 aa)). 2 residues coordinate substrate: glutamine 34 and arginine 38. Residue glutamine 34 coordinates Zn(2+). The residue at position 88 (lysine 88) is an N6-succinyllysine. Glutamate 100 contributes to the Zn(2+) binding site. Asparagine 104 is a binding site for substrate. Phosphothreonine is present on threonine 107. The substrate site is built by arginine 123 and histidine 127. Residue histidine 127 participates in Zn(2+) binding. Cysteine 139 carries the S-glutathionyl cysteine modification. Position 148 is an N6-acetyllysine; alternate (lysine 148). Lysine 148 is modified (N6-succinyllysine; alternate). Residue 157–158 (KM) coordinates substrate. A Zn(2+)-binding site is contributed by glutamate 173. The active-site Proton donor/acceptor is glutamate 173.

It belongs to the glyoxalase I family. As to quaternary structure, homodimer. It depends on Zn(2+) as a cofactor. In terms of processing, glutathionylation at Cys-139 inhibits enzyme activity. Phosphorylated at Thr-107 in the presence of CaMK2. However, this is a consensus site for phosphorylation by CK2 so phosphorylation may be mediated by CK2 rather than CaMK2. Phosphorylation is induced by TNF and suppresses the TNF-induced transcriptional activity of NF-kappa-B. Post-translationally, exists in a nitric oxide (NO)-modified form. The exact nature of the modification is unknown, but it suppresses the TNF-induced transcriptional activity of NF-kappa-B.

It carries out the reaction (R)-S-lactoylglutathione = methylglyoxal + glutathione. It functions in the pathway secondary metabolite metabolism; methylglyoxal degradation; (R)-lactate from methylglyoxal: step 1/2. Its activity is regulated as follows. Subject to competitive inhibition by methyl-gerfelin. In terms of biological role, catalyzes the conversion of hemimercaptal, formed from methylglyoxal and glutathione, to S-lactoylglutathione. Involved in the regulation of TNF-induced transcriptional activity of NF-kappa-B. Required for normal osteoclastogenesis. This is Lactoylglutathione lyase (Glo1) from Mus musculus (Mouse).